A 2102-amino-acid polypeptide reads, in one-letter code: Probable serine/threonine-protein kinase DDB_G0272282 (2102 aa).

The PX domain maps to 1-118 (MKYQLSILGD…NWLVPQNEPA (118 aa)). One can recognise a PH domain in the interval 124–222 (NPDKSGYLIK…WIKAIELSQQ (99 aa)). Residues 225 to 240 (QDQEQYRKQEEEERQK) show a composition bias toward basic and acidic residues. 9 disordered regions span residues 225 to 289 (QDQE…SDGS), 302 to 390 (GPNN…SDLN), 426 to 558 (EQPG…SASP), 574 to 665 (SNLP…PLPN), 685 to 768 (NNNS…NNSL), 804 to 842 (KKKE…GTLR), 1029 to 1051 (QQQQ…SSVN), 1106 to 1224 (GTPT…PQPQ), and 1476 to 1514 (SSKV…SSLT). Composition is skewed to low complexity over residues 256–281 (STLT…LPSS) and 304–327 (NNSN…NNHN). A compositionally biased stretch (basic residues) spans 328-348 (HYNHHNNNHNNSHHHHHHHNG). Low complexity-rich tracts occupy residues 353–376 (SSQV…STSL) and 426–437 (EQPGSYQQPQHQ). Positions 438 to 450 (QGGGGGGGGGGGN) are enriched in gly residues. Residues 466–484 (SNLSSRSNSNSSGSSSGSG) show a composition bias toward low complexity. Gly residues predominate over residues 485-501 (SSSGSGPIGSGGVGGGL). Composition is skewed to low complexity over residues 535 to 558 (SNSS…SASP) and 587 to 626 (NANN…NNGN). Over residues 627–659 (TASGSSCNTTPNLLPAPTNVSPIQNRARSSPMT) the composition is skewed to polar residues. A compositionally biased stretch (basic and acidic residues) spans 804 to 824 (KKKEKDKEKEKDKEKEKEKEI). Residues 827-841 (NISTSTTPNKKNGTL) are compositionally biased toward polar residues. Residues 1106 to 1118 (GTPTTTSGDNTPL) show a composition bias toward polar residues. Composition is skewed to low complexity over residues 1119–1182 (TNTA…NSSI), 1196–1221 (EQQQ…QQQP), and 1476–1492 (SSKV…SPIL). The span at 1493 to 1507 (SSPPPPMKQPPPQVI) shows a compositional bias: pro residues. A Protein kinase domain is found at 1527–1851 (FEIIKPISRG…AYEVKTHPFF (325 aa)). Residues 1533–1541 (ISRGAFGRV) and lysine 1556 each bind ATP. Aspartate 1650 (proton acceptor) is an active-site residue. Low complexity-rich tracts occupy residues 1687-1729 (NTNT…SQTN), 1902-1999 (SQPQ…NINN), and 2006-2052 (NNNS…QINN). Disordered regions lie at residues 1687–1741 (NTNT…KNTL) and 1902–2070 (SQPQ…SKIE). Positions 1852-1911 (ANVNWDTLIDQEMDNIFLPKPENNYDTDYFWDRQSMYDDEAEDDFLTINQSQPQHQSQHQ) constitute an AGC-kinase C-terminal domain.

It belongs to the protein kinase superfamily. AGC Ser/Thr protein kinase family.

The enzyme catalyses L-seryl-[protein] + ATP = O-phospho-L-seryl-[protein] + ADP + H(+). It catalyses the reaction L-threonyl-[protein] + ATP = O-phospho-L-threonyl-[protein] + ADP + H(+). The chain is Probable serine/threonine-protein kinase DDB_G0272282 from Dictyostelium discoideum (Social amoeba).